The sequence spans 149 residues: MNKASRQKKIRELIENHEVSGQQELLGMLEKEGIVVAQATLSRDFAEMGVVRNRTSDGGYRLAVPEEPQVDIIKGLVGMEVLSVASNETSIIIRTLPGRAHGVGSFLDRLTNDNILGTIAGDDTVLVIPSTVRKISSVKSYIQKILSQP.

It belongs to the ArgR family.

The protein localises to the cytoplasm. The protein operates within amino-acid biosynthesis; L-arginine biosynthesis [regulation]. Its function is as follows. Regulates arginine biosynthesis genes. The protein is Arginine repressor of Chlorobaculum tepidum (strain ATCC 49652 / DSM 12025 / NBRC 103806 / TLS) (Chlorobium tepidum).